The following is a 130-amino-acid chain: Small ribosomal subunit protein uS8 (130 aa).

This sequence belongs to the universal ribosomal protein uS8 family. As to quaternary structure, part of the 30S ribosomal subunit. Contacts proteins S5 and S12.

Functionally, one of the primary rRNA binding proteins, it binds directly to 16S rRNA central domain where it helps coordinate assembly of the platform of the 30S subunit. In Acidiphilium cryptum (strain JF-5), this protein is Small ribosomal subunit protein uS8.